A 458-amino-acid chain; its full sequence is Siroheme synthase (458 aa).

Residues 1–203 (MDYLPLFFDL…GNLAAAEQLI (203 aa)) form a precorrin-2 dehydrogenase /sirohydrochlorin ferrochelatase region. NAD(+) contacts are provided by residues 22 to 23 (TI) and 43 to 44 (PK). Ser128 bears the Phosphoserine mark. The tract at residues 216–458 (GEVYLVGAGP…RCHEKLNWYK (243 aa)) is uroporphyrinogen-III C-methyltransferase. Pro225 is a binding site for S-adenosyl-L-methionine. Catalysis depends on Asp248, which acts as the Proton acceptor. Lys270 serves as the catalytic Proton donor. Residues 301 to 303 (GGD), Ile306, 331 to 332 (TA), Met383, and Gly412 each bind S-adenosyl-L-methionine.

The protein in the N-terminal section; belongs to the precorrin-2 dehydrogenase / sirohydrochlorin ferrochelatase family. This sequence in the C-terminal section; belongs to the precorrin methyltransferase family.

The enzyme catalyses uroporphyrinogen III + 2 S-adenosyl-L-methionine = precorrin-2 + 2 S-adenosyl-L-homocysteine + H(+). It carries out the reaction precorrin-2 + NAD(+) = sirohydrochlorin + NADH + 2 H(+). The catalysed reaction is siroheme + 2 H(+) = sirohydrochlorin + Fe(2+). It participates in cofactor biosynthesis; adenosylcobalamin biosynthesis; precorrin-2 from uroporphyrinogen III: step 1/1. Its pathway is cofactor biosynthesis; adenosylcobalamin biosynthesis; sirohydrochlorin from precorrin-2: step 1/1. The protein operates within porphyrin-containing compound metabolism; siroheme biosynthesis; precorrin-2 from uroporphyrinogen III: step 1/1. It functions in the pathway porphyrin-containing compound metabolism; siroheme biosynthesis; siroheme from sirohydrochlorin: step 1/1. It participates in porphyrin-containing compound metabolism; siroheme biosynthesis; sirohydrochlorin from precorrin-2: step 1/1. Multifunctional enzyme that catalyzes the SAM-dependent methylations of uroporphyrinogen III at position C-2 and C-7 to form precorrin-2 via precorrin-1. Then it catalyzes the NAD-dependent ring dehydrogenation of precorrin-2 to yield sirohydrochlorin. Finally, it catalyzes the ferrochelation of sirohydrochlorin to yield siroheme. The protein is Siroheme synthase of Saccharophagus degradans (strain 2-40 / ATCC 43961 / DSM 17024).